We begin with the raw amino-acid sequence, 603 residues long: NADH-ubiquinone oxidoreductase chain 5 (603 aa).

Transmembrane regions (helical) follow at residues 4–24 (YTSI…ATLV), 36–56 (VKTT…LYIF), 87–107 (MMFI…SLWY), 122–142 (LIFL…QLFI), 171–191 (AVLY…WFLL), 211–233 (LPLM…HPWL), 241–261 (TPVS…FLLI), 272–292 (LTQN…AMCA), 301–320 (IVAF…IGIN), 325–347 (AFLH…GSII), 370–390 (STSL…TGFY), 406–422 (AWAL…TSAY), 488–508 (LLAL…TLMT), and 583–603 (MIKL…LLMV).

The protein belongs to the complex I subunit 5 family. Core subunit of respiratory chain NADH dehydrogenase (Complex I) which is composed of 45 different subunits.

The protein localises to the mitochondrion inner membrane. The enzyme catalyses a ubiquinone + NADH + 5 H(+)(in) = a ubiquinol + NAD(+) + 4 H(+)(out). Functionally, core subunit of the mitochondrial membrane respiratory chain NADH dehydrogenase (Complex I) which catalyzes electron transfer from NADH through the respiratory chain, using ubiquinone as an electron acceptor. Essential for the catalytic activity and assembly of complex I. The chain is NADH-ubiquinone oxidoreductase chain 5 (MT-ND5) from Papio hamadryas (Hamadryas baboon).